Consider the following 170-residue polypeptide: J domain-containing protein (170 aa).

Residues Asp-17–Arg-82 form the J domain. The disordered stretch occupies residues Gln-101–Ile-170. A compositionally biased stretch (basic and acidic residues) spans Asn-110–Pro-120. Composition is skewed to low complexity over residues Gly-121 to Gly-135 and Gly-142 to Gly-153.

The protein is J domain-containing protein (jdp) of Manduca sexta (Tobacco hawkmoth).